The primary structure comprises 517 residues: Maturase K (517 aa).

It belongs to the intron maturase 2 family. MatK subfamily.

Its subcellular location is the plastid. The protein resides in the chloroplast. Functionally, usually encoded in the trnK tRNA gene intron. Probably assists in splicing its own and other chloroplast group II introns. This is Maturase K from Caryota mitis (Burmese fishtail palm).